Consider the following 312-residue polypeptide: Aspartoacylase (312 aa).

Residues His20 and Glu23 each contribute to the Zn(2+) site. Residues Arg62, Asn69, and Arg70 each contribute to the N-acetyl-L-aspartate site. His115 contributes to the Zn(2+) binding site. N-acetyl-L-aspartate is bound by residues Tyr163 and Arg167. Glu177 serves as the catalytic Proton donor/acceptor. Tyr287 contributes to the N-acetyl-L-aspartate binding site.

Belongs to the AspA/AstE family. Aspartoacylase subfamily. In terms of assembly, homodimer. Zn(2+) is required as a cofactor.

It localises to the cytoplasm. The protein resides in the nucleus. It catalyses the reaction an N-acyl-L-aspartate + H2O = a carboxylate + L-aspartate. It carries out the reaction N-acetyl-L-aspartate + H2O = L-aspartate + acetate. Catalyzes the deacetylation of N-acetylaspartic acid (NAA) to produce acetate and L-aspartate. NAA occurs in high concentration in brain and its hydrolysis NAA plays a significant part in the maintenance of intact white matter. In other tissues it acts as a scavenger of NAA from body fluids. The sequence is that of Aspartoacylase from Mus musculus (Mouse).